Reading from the N-terminus, the 117-residue chain is Large ribosomal subunit protein bL19 (117 aa).

The protein belongs to the bacterial ribosomal protein bL19 family.

Its function is as follows. This protein is located at the 30S-50S ribosomal subunit interface and may play a role in the structure and function of the aminoacyl-tRNA binding site. The polypeptide is Large ribosomal subunit protein bL19 (Thermotoga neapolitana (strain ATCC 49049 / DSM 4359 / NBRC 107923 / NS-E)).